The primary structure comprises 765 residues: Glycine--tRNA ligase (765 aa).

A mitochondrion-targeting transit peptide spans 1 to 87 (MSLQLLKALP…LRSAAAEFIM (87 aa)). Residues 41 to 73 (TTTKPTPSAPPPPPPTQPQQPAATTSWGTKKQN) form a disordered region. Pro residues predominate over residues 47–58 (PSAPPPPPPTQP). The 57-residue stretch at 95-151 (QLAPLRERVQEQGNLVRDLKAKGAPEIDVKKAVAELKARKKLLEDKELALTPSVVSF) folds into the WHEP-TRS domain. Glutamate 331 provides a ligand contact to glycine. ATP contacts are provided by residues 363–365 (RNE) and 374–375 (RV). Residue glutamate 382 coordinates glycine. 489 to 490 (EC) provides a ligand contact to ATP. 609-611 (EPS) provides a ligand contact to glycine. ATP is bound at residue arginine 616.

This sequence belongs to the class-II aminoacyl-tRNA synthetase family. As to quaternary structure, homodimer.

It localises to the mitochondrion. The protein resides in the cytoplasm. Its subcellular location is the cell projection. The protein localises to the axon. It catalyses the reaction 2 ATP + H(+) = P(1),P(4)-bis(5'-adenosyl) tetraphosphate + diphosphate. It carries out the reaction tRNA(Gly) + glycine + ATP = glycyl-tRNA(Gly) + AMP + diphosphate. In terms of biological role, catalyzes the ATP-dependent ligation of glycine to the 3'-end of its cognate tRNA, via the formation of an aminoacyl-adenylate intermediate (Gly-AMP). Also produces diadenosine tetraphosphate (Ap4A), a universal pleiotropic signaling molecule needed for cell regulation pathways, by direct condensation of 2 ATPs. Thereby, may play a special role in Ap4A homeostasis. Required for terminal arborization of both dendrites and axons during development. In Drosophila melanogaster (Fruit fly), this protein is Glycine--tRNA ligase.